A 143-amino-acid chain; its full sequence is MAIERTFSIIKPNAVAKNVIGSIFSRFEAAGFKIVGTKMLHLTVEQARGFYAEHEGRPFFDGLVEFMTSGPIVVSVLEGENAVQRHRDLLGATNPANALAGTLRADYADSFTENGTHGSDSVESAAREIAFFFAEGEVCPRTR.

ATP contacts are provided by K11, F59, R87, T93, R104, and N114. Catalysis depends on H117, which acts as the Pros-phosphohistidine intermediate.

The protein belongs to the NDK family. In terms of assembly, homotetramer. Mg(2+) is required as a cofactor.

It is found in the cytoplasm. The enzyme catalyses a 2'-deoxyribonucleoside 5'-diphosphate + ATP = a 2'-deoxyribonucleoside 5'-triphosphate + ADP. It carries out the reaction a ribonucleoside 5'-diphosphate + ATP = a ribonucleoside 5'-triphosphate + ADP. In terms of biological role, major role in the synthesis of nucleoside triphosphates other than ATP. The ATP gamma phosphate is transferred to the NDP beta phosphate via a ping-pong mechanism, using a phosphorylated active-site intermediate. The sequence is that of Nucleoside diphosphate kinase from Klebsiella pneumoniae (strain 342).